The following is a 583-amino-acid chain: Torsin-1A-interacting protein 1 (583 aa).

Basic and acidic residues predominate over residues 1–12 (MAGDGRRAEAVR). Disordered stretches follow at residues 1 to 254 (MAGD…RSSS) and 271 to 293 (AHDKQPSVLSSGYQKTPQEWAPQ). The Nuclear portion of the chain corresponds to 1–338 (MAGDGRRAEA…NASFVKRNRW (338 aa)). S60 carries the phosphoserine modification. 2 stretches are compositionally biased toward basic and acidic residues: residues 74 to 101 (VAKERSPVGKRTRLEEFRSDSAKEEVRE) and 115 to 124 (RPQETEEMKT). S135 and S143 each carry phosphoserine. Position 146 is a methionine sulfoxide (M146). A phosphoserine mark is found at S154, S156, and S157. Polar residues predominate over residues 165-174 (QTDLSQTISK). A phosphoserine mark is found at S186 and S215. Positions 216–225 (EEGETEEDDQ) are enriched in acidic residues. T220 bears the Phosphothreonine mark. Phosphoserine is present on residues S227, S230, and S242. The segment covering 238 to 250 (RSRDSDESGDKTT) has biased composition (basic and acidic residues). Residues 277–287 (SVLSSGYQKTP) show a composition bias toward polar residues. M301 carries the methionine sulfoxide modification. Position 305 is a phosphoserine (S305). Residue K308 forms a Glycyl lysine isopeptide (Lys-Gly) (interchain with G-Cter in SUMO2) linkage. 2 positions are modified to phosphoserine: S309 and S315. Residues 309–328 (SELGNQSPSTSSRQVTGQPQ) form a disordered region. Residues 339–355 (WLLPLIAALASGSFWFF) traverse the membrane as a helical segment. Residues 356-583 (STPEVETTAV…ENALKRGICL (228 aa)) are Perinuclear space-facing. Positions 356–583 (STPEVETTAV…ENALKRGICL (228 aa)) are interaction with TOR1A. A coiled-coil region spans residues 359–435 (EVETTAVQEF…SEQIADAYSS (77 aa)). A glycan (N-linked (GlcNAc...) asparagine) is linked at N399. M552 bears the Methionine sulfoxide mark.

Belongs to the TOR1AIP family. Interacts with ATP1B4. Interacts with TOR1A (ATP-bound). Interacts with TOR1B, TOR2A and TOR3A. Interacts with VIM. In terms of processing, phosphorylated. Dephosphorylated at Ser-309 and Ser-315 by serine/threonine-protein phosphatase PP1. As to expression, expressed in muscle, liver and kidney. In terms of tissue distribution, major isoform present in liver, brain and heart (at protein level). Expressed at lower levels than isoform 4 in lung, kidney and spleen (at protein level). Similar levels of isoforms 1 and 4 are observed in ovary, testis and pancreas (at protein level). Expressed at higher levels than isoform 1 in lung, kidney and spleen (at protein level). Expressed at lower levels than isoform 1 in liver, brain and heart (at protein level). Similar levels of isoforms 1 and 4 are observed in ovary, testis and pancreas (at protein level).

The protein localises to the nucleus inner membrane. The protein resides in the nucleus envelope. Its subcellular location is the nucleus. Required for nuclear membrane integrity. Induces TOR1A and TOR1B ATPase activity and is required for their location on the nuclear membrane. Binds to A- and B-type lamins. Possible role in membrane attachment and assembly of the nuclear lamina. The sequence is that of Torsin-1A-interacting protein 1 (TOR1AIP1) from Homo sapiens (Human).